The chain runs to 158 residues: Cyclic pyranopterin monophosphate synthase (158 aa).

Substrate-binding positions include leucine 75–histidine 77 and methionine 113–glutamate 114. Aspartate 128 is an active-site residue.

The protein belongs to the MoaC family. In terms of assembly, homohexamer; trimer of dimers.

The enzyme catalyses (8S)-3',8-cyclo-7,8-dihydroguanosine 5'-triphosphate = cyclic pyranopterin phosphate + diphosphate. It functions in the pathway cofactor biosynthesis; molybdopterin biosynthesis. Catalyzes the conversion of (8S)-3',8-cyclo-7,8-dihydroguanosine 5'-triphosphate to cyclic pyranopterin monophosphate (cPMP). This Azorhizobium caulinodans (strain ATCC 43989 / DSM 5975 / JCM 20966 / LMG 6465 / NBRC 14845 / NCIMB 13405 / ORS 571) protein is Cyclic pyranopterin monophosphate synthase.